A 399-amino-acid chain; its full sequence is Glycerate 2-kinase (399 aa).

Position 48 (K48) interacts with substrate.

The protein belongs to the glycerate kinase type-1 family. Homodimer. Mg(2+) serves as cofactor. Requires Ni(2+) as cofactor. It depends on Mn(2+) as a cofactor. The cofactor is Co(2+). Ca(2+) is required as a cofactor. Zn(2+) serves as cofactor. Requires Sr(2+) as cofactor.

It catalyses the reaction (R)-glycerate + ATP = (2R)-2-phosphoglycerate + ADP + H(+). Its function is as follows. Catalyzes the ATP-dependent phosphorylation of D-glycerate to 2-phosphoglycerate. It can also utilize GTP, CTP, UTP, ADP, AMP or pyrophosphate as phosphate donor. The chain is Glycerate 2-kinase (gck) from Sulfurisphaera tokodaii (strain DSM 16993 / JCM 10545 / NBRC 100140 / 7) (Sulfolobus tokodaii).